The following is a 279-amino-acid chain: Oxygen-dependent coproporphyrinogen-III oxidase (279 aa).

Residue Ser102 participates in substrate binding. Residues His106 and His116 each coordinate a divalent metal cation. His116 functions as the Proton donor in the catalytic mechanism. Substrate is bound at residue 118-120 (NTR). A divalent metal cation-binding residues include His149 and His179. The interval 244-279 (YVEFNLLYDRGTKFGLMTDGNVEAILMSLPPVVKFN) is important for dimerization.

The protein belongs to the aerobic coproporphyrinogen-III oxidase family. As to quaternary structure, homodimer. The cofactor is a divalent metal cation.

The protein localises to the cytoplasm. The catalysed reaction is coproporphyrinogen III + O2 + 2 H(+) = protoporphyrinogen IX + 2 CO2 + 2 H2O. Its pathway is porphyrin-containing compound metabolism; protoporphyrin-IX biosynthesis; protoporphyrinogen-IX from coproporphyrinogen-III (O2 route): step 1/1. Involved in the heme biosynthesis. Catalyzes the aerobic oxidative decarboxylation of propionate groups of rings A and B of coproporphyrinogen-III to yield the vinyl groups in protoporphyrinogen-IX. The chain is Oxygen-dependent coproporphyrinogen-III oxidase from Rickettsia prowazekii (strain Madrid E).